Here is a 310-residue protein sequence, read N- to C-terminus: Pantothenate kinase (310 aa).

95 to 102 (GSVAVGKS) serves as a coordination point for ATP.

It belongs to the prokaryotic pantothenate kinase family.

Its subcellular location is the cytoplasm. The catalysed reaction is (R)-pantothenate + ATP = (R)-4'-phosphopantothenate + ADP + H(+). Its pathway is cofactor biosynthesis; coenzyme A biosynthesis; CoA from (R)-pantothenate: step 1/5. The chain is Pantothenate kinase from Mycobacteroides abscessus (strain ATCC 19977 / DSM 44196 / CCUG 20993 / CIP 104536 / JCM 13569 / NCTC 13031 / TMC 1543 / L948) (Mycobacterium abscessus).